The chain runs to 414 residues: Gamma-glutamyl phosphate reductase (414 aa).

This sequence belongs to the gamma-glutamyl phosphate reductase family.

It localises to the cytoplasm. It catalyses the reaction L-glutamate 5-semialdehyde + phosphate + NADP(+) = L-glutamyl 5-phosphate + NADPH + H(+). It functions in the pathway amino-acid biosynthesis; L-proline biosynthesis; L-glutamate 5-semialdehyde from L-glutamate: step 2/2. Its function is as follows. Catalyzes the NADPH-dependent reduction of L-glutamate 5-phosphate into L-glutamate 5-semialdehyde and phosphate. The product spontaneously undergoes cyclization to form 1-pyrroline-5-carboxylate. This is Gamma-glutamyl phosphate reductase from Limosilactobacillus reuteri (strain DSM 20016) (Lactobacillus reuteri).